The primary structure comprises 301 residues: GTP cyclohydrolase FolE2 (301 aa).

The protein belongs to the GTP cyclohydrolase IV family.

The catalysed reaction is GTP + H2O = 7,8-dihydroneopterin 3'-triphosphate + formate + H(+). Its pathway is cofactor biosynthesis; 7,8-dihydroneopterin triphosphate biosynthesis; 7,8-dihydroneopterin triphosphate from GTP: step 1/1. Converts GTP to 7,8-dihydroneopterin triphosphate. This chain is GTP cyclohydrolase FolE2, found in Pseudomonas syringae pv. tomato (strain ATCC BAA-871 / DC3000).